The chain runs to 241 residues: Uridylate kinase (241 aa).

14-17 (KLSG) serves as a coordination point for ATP. G56 contacts UMP. ATP-binding residues include G57 and R61. Residues D77 and 138–145 (TGNPFFTT) each bind UMP. ATP is bound by residues T165, Y171, and D174.

Belongs to the UMP kinase family. Homohexamer.

It is found in the cytoplasm. It carries out the reaction UMP + ATP = UDP + ADP. It functions in the pathway pyrimidine metabolism; CTP biosynthesis via de novo pathway; UDP from UMP (UMPK route): step 1/1. With respect to regulation, inhibited by UTP. Catalyzes the reversible phosphorylation of UMP to UDP. This chain is Uridylate kinase, found in Psychrobacter arcticus (strain DSM 17307 / VKM B-2377 / 273-4).